The primary structure comprises 318 residues: MPKRGKKGAVVEDAEEPKTEPEAKKSKAGAKKNEKEAVGEGAVLYEDPPDQKTSPSGKSATLKICSWNVDGLRAWIKKKGLDWVKEEAPDILCLQETKCSENKLPVELQELSGLSHQYWSAPSDKEGYSGVGLLSRQCPLKVSYGIGEEEHDQEGRVIVAEYDAFVLVTAYVPNAGRGLVRLEYRQRWDEAFRKFLKGLASRKPLVLCGDLNVAHEEIDLRNPKGNKKNAGFTPQERQGFGELLQAVPLTDSFRHLYPNTAYAYTFWTYMMNARSKNVGWRLDYFLLSQSVLPALCDSKIRSKALGSDHCPITLYLAL.

The interval 1–59 is disordered; the sequence is MPKRGKKGAVVEDAEEPKTEPEAKKSKAGAKKNEKEAVGEGAVLYEDPPDQKTSPSGKS. The interval 2 to 33 is necessary for interaction with YBX1, binding to RNA, association together with NPM1 to rRNA, endoribonuclease activity on abasic RNA and localization in the nucleoli; that stretch reads PKRGKKGAVVEDAEEPKTEPEAKKSKAGAKKN. Lys6 and Lys7 each carry N6-acetyllysine; by EP300. The Nuclear localization signal (NLS) signature appears at 8-13; the sequence is GAVVED. Residues 16 to 38 are compositionally biased toward basic and acidic residues; that stretch reads EPKTEPEAKKSKAGAKKNEKEAV. Residues 23–33 are necessary for interaction with NPM1 and for efficient rRNA binding; it reads AKKSKAGAKKN. N6-acetyllysine occurs at positions 27, 31, 32, and 35. Phosphoserine is present on Ser54. The Nuclear export signal (NES) signature appears at 64 to 80; it reads ICSWNVDGLRAWIKKKG. Position 65 is an S-nitrosocysteine; alternate (Cys65). Cys65 and Cys93 are oxidised to a cystine. Asp70 is a Mg(2+) binding site. The residue at position 93 (Cys93) is an S-nitrosocysteine; alternate. A Mg(2+)-binding site is contributed by Glu96. Tyr171 is a catalytic residue. N6-acetyllysine is present on Lys197. Residues Asp210 and Asn212 each coordinate Mg(2+). The active-site Proton donor/acceptor is Asp210. Position 233 is a phosphothreonine; by CDK5 (Thr233). The segment at 289 to 318 is mitochondrial targeting sequence (MTS); sequence QSVLPALCDSKIRSKALGSDHCPITLYLAL. Position 308 (Asp308) interacts with Mg(2+). S-nitrosocysteine is present on Cys310.

This sequence belongs to the DNA repair enzymes AP/ExoA family. Monomer. Homodimer; disulfide-linked. Component of the SET complex, composed of at least APEX1, SET, ANP32A, HMGB2, NME1 and TREX1. Associates with the dimer XRCC5/XRCC6 in a DNA-dependent manner. Interacts with SIRT1; the interaction is increased in the context of genotoxic stress. Interacts with HDAC1, HDAC2 and HDAC3; the interactions are not dependent on the APEX1 acetylation status. Interacts with XRCC1; the interaction is induced by SIRT1 and increased with the APEX1 acetylated form. Interacts with NPM1 (via N-terminal domain); the interaction is RNA-dependent and decreases in hydrogen peroxide-damaged cells. Interacts (via N-terminus) with YBX1 (via C-terminus); the interaction is increased in presence of APEX1 acetylated at Lys-6 and Lys-7. Interacts with HNRNPL; the interaction is DNA-dependent. Interacts (via N-terminus) with KPNA1 and KPNA2. Interacts with TXN; the interaction stimulates the FOS/JUN AP-1 complex DNA-binding activity in a redox-dependent manner. Interacts with GZMA, KRT8, MDM2, POLB, PRDX6, PRPF19, RPLP0, TOMM20 and WDR77. Binds to CDK5. Requires Mg(2+) as cofactor. It depends on Mn(2+) as a cofactor. Phosphorylated. Phosphorylation by kinase PKC or casein kinase CK2 results in enhanced redox activity that stimulates binding of the FOS/JUN AP-1 complex to its cognate binding site. AP-endodeoxyribonuclease activity is not affected by CK2-mediated phosphorylation. Phosphorylation of Thr-233 by CDK5 in response to MPP(+)/MPTP (1-methyl-4-phenylpyridinium) reduces AP-endodeoxyribonuclease activity resulting in accumulation of DNA damage and contributing to neuronal death. Post-translationally, acetylated on Lys-6 and Lys-7. Acetylation is increased by the transcriptional coactivator EP300 acetyltransferase, genotoxic agents like H(2)O(2) and methyl methanesulfonate (MMS). Acetylation increases its binding affinity to the negative calcium response element (nCaRE) DNA promoter. The acetylated form induces a stronger binding of YBX1 to the Y-box sequence in the MDR1 promoter than the unacetylated form. Deacetylated on lysines. Lys-6 and Lys-7 are deacetylated by SIRT1. In terms of processing, cleaved at Lys-31 by granzyme A to create the mitochondrial form; leading in reduction of binding to DNA, AP endodeoxyribonuclease activity, redox activation of transcription factors and to enhanced cell death. Cleaved by granzyme K; leading to intracellular ROS accumulation and enhanced cell death after oxidative stress. Cys-69 and Cys-93 are nitrosylated in response to nitric oxide (NO) and lead to the exposure of the nuclear export signal (NES). Post-translationally, ubiquitinated by MDM2; leading to translocation to the cytoplasm and proteasomal degradation. As to expression, the mitochondrial form is expressed in liver (at protein level). Thymus.

It localises to the nucleus. The protein localises to the nucleolus. It is found in the nucleus speckle. The protein resides in the endoplasmic reticulum. Its subcellular location is the cytoplasm. It localises to the mitochondrion. It catalyses the reaction Exonucleolytic cleavage in the 3'- to 5'-direction to yield nucleoside 5'-phosphates.. With respect to regulation, NPM1 stimulates endodeoxyribonuclease activity on double-stranded DNA with AP sites, but inhibits endoribonuclease activity on single-stranded RNA containing AP sites. Its function is as follows. Multifunctional protein that plays a central role in the cellular response to oxidative stress. The two major activities of APEX1 are DNA repair and redox regulation of transcriptional factors. Functions as an apurinic/apyrimidinic (AP) endodeoxyribonuclease in the DNA base excision repair (BER) pathway of DNA lesions induced by oxidative and alkylating agents. Initiates repair of AP sites in DNA by catalyzing hydrolytic incision of the phosphodiester backbone immediately adjacent to the damage, generating a single-strand break with 5'-deoxyribose phosphate and 3'-hydroxyl ends. Also incises at AP sites in the DNA strand of DNA/RNA hybrids, single-stranded DNA regions of R-loop structures, and single-stranded RNA molecules. Has 3'-5' exoribonuclease activity on mismatched deoxyribonucleotides at the 3' termini of nicked or gapped DNA molecules during short-patch BER. Possesses DNA 3' phosphodiesterase activity capable of removing lesions (such as phosphoglycolate) blocking the 3' side of DNA strand breaks. May also play a role in the epigenetic regulation of gene expression by participating in DNA demethylation. Acts as a loading factor for POLB onto non-incised AP sites in DNA and stimulates the 5'-terminal deoxyribose 5'-phosphate (dRp) excision activity of POLB. Plays a role in the protection from granzyme-mediated cellular repair leading to cell death. Also involved in the DNA cleavage step of class switch recombination (CSR). On the other hand, APEX1 also exerts reversible nuclear redox activity to regulate DNA binding affinity and transcriptional activity of transcriptional factors by controlling the redox status of their DNA-binding domain, such as the FOS/JUN AP-1 complex after exposure to IR. Involved in calcium-dependent down-regulation of parathyroid hormone (PTH) expression by binding to negative calcium response elements (nCaREs). Together with HNRNPL or the dimer XRCC5/XRCC6, associates with nCaRE, acting as an activator of transcriptional repression. Stimulates the YBX1-mediated MDR1 promoter activity, when acetylated at Lys-6 and Lys-7, leading to drug resistance. Also acts as an endoribonuclease involved in the control of single-stranded RNA metabolism. Plays a role in regulating MYC mRNA turnover by preferentially cleaving in between UA and CA dinucleotides of the MYC coding region determinant (CRD). In association with NMD1, plays a role in the rRNA quality control process during cell cycle progression. Associates, together with YBX1, on the MDR1 promoter. Together with NPM1, associates with rRNA. Binds DNA and RNA. This chain is DNA repair nuclease/redox regulator APEX1 (APEX1), found in Bos taurus (Bovine).